The following is a 113-amino-acid chain: MKIMEIEKTNRMNALFEFYAALLTDKQMNYIELYYADDYSLAEIAEEFGVSRQAVYDNIKRTEKILEAYEMKLHMYSDYIVRSEIFDDILAKYPSDHYLRDKISILTSIDNRD.

The protein belongs to the UPF0122 family.

In terms of biological role, might take part in the signal recognition particle (SRP) pathway. This is inferred from the conservation of its genetic proximity to ftsY/ffh. May be a regulatory protein. The chain is UPF0122 protein Sez_1013 from Streptococcus equi subsp. zooepidemicus (strain MGCS10565).